Reading from the N-terminus, the 299-residue chain is Oxaloacetate decarboxylase (299 aa).

S57 provides a ligand contact to substrate. A Mg(2+)-binding site is contributed by D95. R167 and H243 together coordinate substrate.

Belongs to the isocitrate lyase/PEP mutase superfamily. Oxaloacetate decarboxylase family. Homotetramer; dimer of dimers. Requires Mg(2+) as cofactor.

It catalyses the reaction oxaloacetate + H(+) = pyruvate + CO2. Functionally, catalyzes the decarboxylation of oxaloacetate into pyruvate. Seems to play a role in maintaining cellular concentrations of bicarbonate and pyruvate. This is Oxaloacetate decarboxylase from Paraburkholderia xenovorans (strain LB400).